The sequence spans 941 residues: Endoglucanase (941 aa).

A signal peptide spans 1 to 29 (MKIKQIKQSLSLLLIITLIMSLFVPMASA). SLH domains follow at residues 37–94 (NAFP…GLEA), 95–158 (SSKD…LSLP), and 161–224 (QREY…DYLY). Glu373 serves as the catalytic Proton donor. Glu485 functions as the Nucleophile in the catalytic mechanism.

This sequence belongs to the glycosyl hydrolase 5 (cellulase A) family.

The catalysed reaction is Endohydrolysis of (1-&gt;4)-beta-D-glucosidic linkages in cellulose, lichenin and cereal beta-D-glucans.. This chain is Endoglucanase, found in Bacillus sp. (strain KSM-635).